A 1939-amino-acid chain; its full sequence is Myosin-4 (1939 aa).

The Myosin N-terminal SH3-like domain occupies 33–82 (DAKTSVFVVDPKESYVKAIVQSREGGKVTAKTEAGATVTVKEDQVFSMNP). Residues Thr64 and Thr69 each carry the phosphothreonine modification. Ser79 carries the post-translational modification Phosphoserine. Residues 86–782 (DKIEDMAMMT…LLGTLEEMRD (697 aa)) form the Myosin motor domain. Residue Lys130 is modified to N6,N6,N6-trimethyllysine. 179–186 (GESGAGKT) provides a ligand contact to ATP. Tyr389 carries the phosphotyrosine modification. Thr391 bears the Phosphothreonine mark. Residue Ser392 is modified to Phosphoserine. Residue Thr419 is modified to Phosphothreonine. Position 424 is a phosphotyrosine (Tyr424). The residue at position 625 (Ser625) is a Phosphoserine. An actin-binding region spans residues 659–681 (LNKLMTNLRSTHPHFVRCIIPNE). Position 757 is a pros-methylhistidine (His757). Residues 761–775 (KFGHTKVFFKAGLLG) are actin-binding. Position 776 is a phosphothreonine (Thr776). The IQ domain occupies 785–814 (LAQLITRTQAICRGFLMRVEFRKMMERRES). The stretch at 843–1939 (LLKSAETEKE…EVHTKVISEE (1097 aa)) forms a coiled coil. A phosphoserine mark is found at Ser1092, Ser1162, and Ser1237. Thr1241 is subject to Phosphothreonine. Ser1243 is subject to Phosphoserine. Thr1255 carries the post-translational modification Phosphothreonine. Ser1261 carries the phosphoserine modification. Residue Thr1265 is modified to Phosphothreonine. At Ser1278 the chain carries Phosphoserine. Position 1286 is a phosphothreonine (Thr1286). 5 positions are modified to phosphoserine: Ser1288, Ser1292, Ser1303, Ser1306, and Ser1413. A Phosphotyrosine modification is found at Tyr1464. The residue at position 1467 (Thr1467) is a Phosphothreonine. Position 1474 is a phosphoserine (Ser1474). Residue Tyr1492 is modified to Phosphotyrosine. Ser1495 is subject to Phosphoserine. Thr1501 is modified (phosphothreonine). A Phosphoserine modification is found at Ser1514. Thr1517 carries the post-translational modification Phosphothreonine. Residues Ser1542, Ser1547, Ser1554, Ser1574, Ser1600, Ser1603, Ser1714, and Ser1726 each carry the phosphoserine modification. Phosphothreonine occurs at positions 1730 and 1736. Position 1739 is a phosphoserine (Ser1739).

Belongs to the TRAFAC class myosin-kinesin ATPase superfamily. Myosin family. As to quaternary structure, muscle myosin is a hexameric protein that consists of 2 heavy chain subunits (MHC), 2 alkali light chain subunits (MLC) and 2 regulatory light chain subunits (MLC-2).

It is found in the cytoplasm. Its subcellular location is the myofibril. Muscle contraction. This chain is Myosin-4 (MYH4), found in Homo sapiens (Human).